A 473-amino-acid polypeptide reads, in one-letter code: Endoglucanase B (473 aa).

The signal sequence occupies residues 1–17 (MKFLNTFSLLSLAIIGS). The interval 18-367 (KAMKNISSKE…GLIKGLGNSI (350 aa)) is catalytic. Glu-173 acts as the Proton donor in catalysis. The active-site Nucleophile is the Glu-295. The segment at 365-387 (NSIKTRTTIRRTTTTTTSQSQPT) is linker. 2 consecutive CBM10 domains span residues 391–427 (SCFSVNLGYSCCNGCEVEYTDSDGEWGVENGNWCGIK) and 436–473 (ICWSEKLGYPCCQNTSSVVYTDNDGKWGVENGNWCGIY).

It belongs to the glycosyl hydrolase 5 (cellulase A) family.

The enzyme catalyses Endohydrolysis of (1-&gt;4)-beta-D-glucosidic linkages in cellulose, lichenin and cereal beta-D-glucans.. Rate of hydrolysis of cellulo-oligosaccharides increased with increasing chain length from cellotriose to cellopentaose. The chain is Endoglucanase B (CELB) from Neocallimastix patriciarum (Rumen fungus).